We begin with the raw amino-acid sequence, 570 residues long: Hydroxylamine reductase (570 aa).

[4Fe-4S] cluster contacts are provided by Cys-5, Cys-8, Cys-17, and Cys-23. The hybrid [4Fe-2O-2S] cluster site is built by His-266, Glu-290, Cys-334, Cys-425, Cys-453, Cys-478, Glu-513, and Lys-515. A Cysteine persulfide modification is found at Cys-425.

Belongs to the HCP family. [4Fe-4S] cluster serves as cofactor. The cofactor is hybrid [4Fe-2O-2S] cluster.

It localises to the cytoplasm. The catalysed reaction is A + NH4(+) + H2O = hydroxylamine + AH2 + H(+). Functionally, catalyzes the reduction of hydroxylamine to form NH(3) and H(2)O. The chain is Hydroxylamine reductase from Clostridium botulinum (strain Okra / Type B1).